A 339-amino-acid polypeptide reads, in one-letter code: MQDTAIQEIQGAETLEALQAVKTKYVGKSGLVTKELGSLGKLPPEERKACGAEINVVRAAIQAALDEKESALKRAALDAKLASEAIDVTLPGLPLPAGGLHPISRVLDDLIGIYRQMGYAVIEGPEVEEEHYNFEALNVPWYHPARDLQDTFWLEDGRLLRTHTSPMQIRYMVDHEPPFKIVVRGKVYRYEATDATHEAMFHQLEGLVVGDGISMSDLKGTIAEMARGLYGASAKARFQPSYYPFVEPGADFAVYWENPRGESKWLELGGCGMVHPNVFKAVDDLREAAGKDRVYEGKTGFAFGLGLERIAMLKYGIPDIRYFYANDPRVIGQFRGELG.

A Mg(2+)-binding site is contributed by Glu247.

This sequence belongs to the class-II aminoacyl-tRNA synthetase family. Phe-tRNA synthetase alpha subunit type 1 subfamily. Tetramer of two alpha and two beta subunits. Requires Mg(2+) as cofactor.

The protein localises to the cytoplasm. It catalyses the reaction tRNA(Phe) + L-phenylalanine + ATP = L-phenylalanyl-tRNA(Phe) + AMP + diphosphate + H(+). The polypeptide is Phenylalanine--tRNA ligase alpha subunit (pheS) (Deinococcus radiodurans (strain ATCC 13939 / DSM 20539 / JCM 16871 / CCUG 27074 / LMG 4051 / NBRC 15346 / NCIMB 9279 / VKM B-1422 / R1)).